The primary structure comprises 467 residues: NALCN channel auxiliary factor 1 (467 aa).

Residues L40–A60 traverse the membrane as a helical segment. Positions M121–R161 are disordered. N160, N226, and N254 each carry an N-linked (GlcNAc...) asparagine glycan. Cystine bridges form between C200–C270, C235–C322, C255–C270, C313–C350, C333–C386, C339–C385, and C343–C370. Basic and acidic residues predominate over residues S390 to C408. The tract at residues S390–P409 is disordered. Residues L426 to Q446 traverse the membrane as a helical segment. A glycan (N-linked (GlcNAc...) asparagine) is linked at N462.

It belongs to the NALF family. In terms of assembly, component of the NALCN channel complex. NALCN complex consists of NALCN and auxiliary subunits, UNC79, UNC80 and NACL1. These auxiliary subunits are essential for the NALCN channel function.

It localises to the cell membrane. Functionally, auxillary component of the NALCN sodium channel complex, a channel that regulates the resting membrane potential and controls neuronal excitability. The sequence is that of NALCN channel auxiliary factor 1 from Mus musculus (Mouse).